Consider the following 282-residue polypeptide: Acetyl-coenzyme A carboxylase carboxyl transferase subunit beta (282 aa).

Positions 29–282 (LPINCPSCSA…LSSLLGLHQG (254 aa)) constitute a CoA carboxyltransferase N-terminal domain. Zn(2+)-binding residues include Cys33, Cys36, Cys52, and Cys55. Residues 33 to 55 (CPSCSARIAAEALQRNLKVCPKC) form a C4-type zinc finger.

Belongs to the AccD/PCCB family. Acetyl-CoA carboxylase is a heterohexamer composed of biotin carboxyl carrier protein (AccB), biotin carboxylase (AccC) and two subunits each of ACCase subunit alpha (AccA) and ACCase subunit beta (AccD). Zn(2+) is required as a cofactor.

Its subcellular location is the cytoplasm. The catalysed reaction is N(6)-carboxybiotinyl-L-lysyl-[protein] + acetyl-CoA = N(6)-biotinyl-L-lysyl-[protein] + malonyl-CoA. Its pathway is lipid metabolism; malonyl-CoA biosynthesis; malonyl-CoA from acetyl-CoA: step 1/1. Component of the acetyl coenzyme A carboxylase (ACC) complex. Biotin carboxylase (BC) catalyzes the carboxylation of biotin on its carrier protein (BCCP) and then the CO(2) group is transferred by the transcarboxylase to acetyl-CoA to form malonyl-CoA. The sequence is that of Acetyl-coenzyme A carboxylase carboxyl transferase subunit beta from Syntrophomonas wolfei subsp. wolfei (strain DSM 2245B / Goettingen).